Here is a 292-residue protein sequence, read N- to C-terminus: Pantothenate synthetase (292 aa).

ATP is bound at residue 30-37 (MGFLHIGH). The Proton donor role is filled by H37. A (R)-pantoate-binding site is contributed by Q61. Q61 contributes to the beta-alanine binding site. 147-150 (GEKD) contributes to the ATP binding site. Position 153 (Q153) interacts with (R)-pantoate. ATP is bound by residues V176 and 184-187 (CSSR).

Belongs to the pantothenate synthetase family. In terms of assembly, homodimer.

It localises to the cytoplasm. It carries out the reaction (R)-pantoate + beta-alanine + ATP = (R)-pantothenate + AMP + diphosphate + H(+). Its pathway is cofactor biosynthesis; (R)-pantothenate biosynthesis; (R)-pantothenate from (R)-pantoate and beta-alanine: step 1/1. Its function is as follows. Catalyzes the condensation of pantoate with beta-alanine in an ATP-dependent reaction via a pantoyl-adenylate intermediate. This chain is Pantothenate synthetase, found in Agrobacterium fabrum (strain C58 / ATCC 33970) (Agrobacterium tumefaciens (strain C58)).